Here is a 176-residue protein sequence, read N- to C-terminus: MQSSKNKINGPINLVRIEGVIDGINKVVYLFMDYHADINEQTNCEDQNNSINISKYLLDNLTTSNDNNVVYDFFLEILPSDIFTNFNTTIFSILKDNELEYLASVKKLFLQNVDNSNNKITSKLKNVRLHYIDIRDKMYLLMYDPIRFAISSINQLQKNPDDKLLDIMHIKLLVDV.

The protein belongs to the mimivirus R160 family.

This is an uncharacterized protein from Acanthamoeba polyphaga mimivirus (APMV).